The primary structure comprises 728 residues: LPS-assembly protein LptD (728 aa).

A signal peptide spans M1–A21.

Belongs to the LptD family. Component of the lipopolysaccharide transport and assembly complex. Interacts with LptE and LptA.

The protein localises to the cell outer membrane. Its function is as follows. Together with LptE, is involved in the assembly of lipopolysaccharide (LPS) at the surface of the outer membrane. This chain is LPS-assembly protein LptD, found in Thiobacillus denitrificans (strain ATCC 25259 / T1).